The primary structure comprises 393 residues: S-adenosylmethionine synthase (393 aa).

His17 contacts ATP. Mg(2+) is bound at residue Asp19. Position 45 (Glu45) interacts with K(+). Positions 58 and 106 each coordinate L-methionine. A flexible loop region spans residues 106 to 116; sequence QSAHIAQGVDA. ATP contacts are provided by residues 171 to 173, Asp246, 252 to 253, Ala269, and Lys273; these read DAK and RK. Position 246 (Asp246) interacts with L-methionine. Lys277 is a binding site for L-methionine.

This sequence belongs to the AdoMet synthase family. In terms of assembly, homotetramer; dimer of dimers. It depends on Mg(2+) as a cofactor. K(+) is required as a cofactor.

The protein resides in the cytoplasm. It carries out the reaction L-methionine + ATP + H2O = S-adenosyl-L-methionine + phosphate + diphosphate. The protein operates within amino-acid biosynthesis; S-adenosyl-L-methionine biosynthesis; S-adenosyl-L-methionine from L-methionine: step 1/1. Catalyzes the formation of S-adenosylmethionine (AdoMet) from methionine and ATP. The overall synthetic reaction is composed of two sequential steps, AdoMet formation and the subsequent tripolyphosphate hydrolysis which occurs prior to release of AdoMet from the enzyme. This is S-adenosylmethionine synthase from Roseobacter denitrificans (strain ATCC 33942 / OCh 114) (Erythrobacter sp. (strain OCh 114)).